The chain runs to 286 residues: ATP synthase gamma chain (286 aa).

Belongs to the ATPase gamma chain family. In terms of assembly, F-type ATPases have 2 components, CF(1) - the catalytic core - and CF(0) - the membrane proton channel. CF(1) has five subunits: alpha(3), beta(3), gamma(1), delta(1), epsilon(1). CF(0) has three main subunits: a, b and c.

Its subcellular location is the cell inner membrane. Its function is as follows. Produces ATP from ADP in the presence of a proton gradient across the membrane. The gamma chain is believed to be important in regulating ATPase activity and the flow of protons through the CF(0) complex. The protein is ATP synthase gamma chain of Pseudomonas fluorescens (strain SBW25).